The primary structure comprises 310 residues: Probable deoxyhypusine synthase (310 aa).

K280 (nucleophile) is an active-site residue.

This sequence belongs to the deoxyhypusine synthase family. The cofactor is NAD(+).

The catalysed reaction is [eIF5A protein]-L-lysine + spermidine = [eIF5A protein]-deoxyhypusine + propane-1,3-diamine. The protein operates within protein modification; eIF5A hypusination. In terms of biological role, catalyzes the NAD-dependent oxidative cleavage of spermidine and the subsequent transfer of the butylamine moiety of spermidine to the epsilon-amino group of a specific lysine residue of the eIF-5A precursor protein to form the intermediate deoxyhypusine residue. This chain is Probable deoxyhypusine synthase (dys), found in Aeropyrum pernix (strain ATCC 700893 / DSM 11879 / JCM 9820 / NBRC 100138 / K1).